The following is a 202-amino-acid chain: Protein-methionine-sulfoxide reductase heme-binding subunit MsrQ (202 aa).

6 helical membrane passes run 8-28 (LAVF…AWIF), 42-62 (LGLG…LQKL), 75-95 (LGLW…VFIL), 110-130 (PYII…ITSN), 147-167 (LVYL…RADL), and 169-189 (EWTL…PSIA).

Belongs to the MsrQ family. In terms of assembly, heterodimer of a catalytic subunit (MsrP) and a heme-binding subunit (MsrQ). It depends on FMN as a cofactor. Heme b is required as a cofactor.

The protein resides in the cell inner membrane. In terms of biological role, part of the MsrPQ system that repairs oxidized periplasmic proteins containing methionine sulfoxide residues (Met-O), using respiratory chain electrons. Thus protects these proteins from oxidative-stress damage caused by reactive species of oxygen and chlorine generated by the host defense mechanisms. MsrPQ is essential for the maintenance of envelope integrity under bleach stress, rescuing a wide series of structurally unrelated periplasmic proteins from methionine oxidation. MsrQ provides electrons for reduction to the reductase catalytic subunit MsrP, using the quinone pool of the respiratory chain. This is Protein-methionine-sulfoxide reductase heme-binding subunit MsrQ from Pseudomonas aeruginosa (strain ATCC 15692 / DSM 22644 / CIP 104116 / JCM 14847 / LMG 12228 / 1C / PRS 101 / PAO1).